Consider the following 559-residue polypeptide: Alkaline phosphatase PhoK (559 aa).

The first 19 residues, 1 to 19 (MLKHVAAALLLATAMPVVA), serve as a signal peptide directing secretion. Positions 49 and 89 each coordinate Zn(2+). Residue threonine 89 is the Phosphothreonine intermediate of the active site. Cysteine 90 and cysteine 126 are oxidised to a cystine. Substrate is bound by residues asparagine 110 and 171-173 (KDR). A disulfide bridge links cysteine 231 with cysteine 314. Residues aspartate 300, histidine 304, aspartate 345, histidine 346, and histidine 491 each coordinate Zn(2+). A disulfide bond links cysteine 545 and cysteine 556.

As to quaternary structure, monomer. Requires Zn(2+) as cofactor.

Its subcellular location is the secreted. The catalysed reaction is a phosphate monoester + H2O = an alcohol + phosphate. Its function is as follows. Alkaline phosphatase with broad substrate specificity. Precipitates uranium from alkaline solutions. The polypeptide is Alkaline phosphatase PhoK (Sphingomonas sp).